A 196-amino-acid chain; its full sequence is 7-methyl-GTP pyrophosphatase (196 aa).

Catalysis depends on Asp72, which acts as the Proton acceptor.

It belongs to the Maf family. YceF subfamily. It depends on a divalent metal cation as a cofactor.

Its subcellular location is the cytoplasm. It catalyses the reaction N(7)-methyl-GTP + H2O = N(7)-methyl-GMP + diphosphate + H(+). Nucleoside triphosphate pyrophosphatase that hydrolyzes 7-methyl-GTP (m(7)GTP). May have a dual role in cell division arrest and in preventing the incorporation of modified nucleotides into cellular nucleic acids. In Neisseria gonorrhoeae (strain ATCC 700825 / FA 1090), this protein is 7-methyl-GTP pyrophosphatase.